Consider the following 590-residue polypeptide: Aspartate--tRNA(Asp/Asn) ligase (590 aa).

Glu170 contributes to the L-aspartate binding site. Residues 194–197 (QLFK) are aspartate. Arg216 is an L-aspartate binding site. ATP-binding positions include 216–218 (RDE) and Gln225. His448 contacts L-aspartate. An ATP-binding site is contributed by Glu482. Arg489 contributes to the L-aspartate binding site. 534–537 (GWDR) serves as a coordination point for ATP. Residues 557-590 (SGGGADPLTGAPAPITPQQRRESGIDAKPKKDGE) form a disordered region. Residues 575–590 (QRRESGIDAKPKKDGE) are compositionally biased toward basic and acidic residues.

Belongs to the class-II aminoacyl-tRNA synthetase family. Type 1 subfamily. As to quaternary structure, homodimer.

It is found in the cytoplasm. The enzyme catalyses tRNA(Asx) + L-aspartate + ATP = L-aspartyl-tRNA(Asx) + AMP + diphosphate. Aspartyl-tRNA synthetase with relaxed tRNA specificity since it is able to aspartylate not only its cognate tRNA(Asp) but also tRNA(Asn). Reaction proceeds in two steps: L-aspartate is first activated by ATP to form Asp-AMP and then transferred to the acceptor end of tRNA(Asp/Asn). This is Aspartate--tRNA(Asp/Asn) ligase from Mycobacterium sp. (strain JLS).